Consider the following 341-residue polypeptide: N-acetyl-gamma-glutamyl-phosphate reductase (341 aa).

Residue cysteine 163 is part of the active site.

It belongs to the NAGSA dehydrogenase family. Type 1 subfamily.

It is found in the cytoplasm. It carries out the reaction N-acetyl-L-glutamate 5-semialdehyde + phosphate + NADP(+) = N-acetyl-L-glutamyl 5-phosphate + NADPH + H(+). The protein operates within amino-acid biosynthesis; L-arginine biosynthesis; N(2)-acetyl-L-ornithine from L-glutamate: step 3/4. Catalyzes the NADPH-dependent reduction of N-acetyl-5-glutamyl phosphate to yield N-acetyl-L-glutamate 5-semialdehyde. In Idiomarina loihiensis (strain ATCC BAA-735 / DSM 15497 / L2-TR), this protein is N-acetyl-gamma-glutamyl-phosphate reductase.